A 244-amino-acid chain; its full sequence is 1-(5-phosphoribosyl)-5-[(5-phosphoribosylamino)methylideneamino] imidazole-4-carboxamide isomerase (244 aa).

The active-site Proton acceptor is the D10. D132 serves as the catalytic Proton donor.

This sequence belongs to the HisA/HisF family.

It localises to the cytoplasm. The catalysed reaction is 1-(5-phospho-beta-D-ribosyl)-5-[(5-phospho-beta-D-ribosylamino)methylideneamino]imidazole-4-carboxamide = 5-[(5-phospho-1-deoxy-D-ribulos-1-ylimino)methylamino]-1-(5-phospho-beta-D-ribosyl)imidazole-4-carboxamide. The protein operates within amino-acid biosynthesis; L-histidine biosynthesis; L-histidine from 5-phospho-alpha-D-ribose 1-diphosphate: step 4/9. The chain is 1-(5-phosphoribosyl)-5-[(5-phosphoribosylamino)methylideneamino] imidazole-4-carboxamide isomerase from Xanthomonas oryzae pv. oryzae (strain MAFF 311018).